We begin with the raw amino-acid sequence, 393 residues long: S-adenosylmethionine synthase 3 (393 aa).

Glu-9 lines the Mg(2+) pocket. Residue His-15 coordinates ATP. Glu-43 is a K(+) binding site. L-methionine-binding residues include Glu-56 and Gln-99. ATP is bound by residues 167 to 169 (DGK), 235 to 238 (SGRF), Asp-246, 252 to 253 (RK), Ala-269, Lys-273, and Lys-277. Asp-246 is an L-methionine binding site. L-methionine is bound at residue Lys-277.

This sequence belongs to the AdoMet synthase family. Homotetramer. Requires Mn(2+) as cofactor. Mg(2+) is required as a cofactor. The cofactor is Co(2+). It depends on K(+) as a cofactor.

The protein resides in the cytoplasm. The enzyme catalyses L-methionine + ATP + H2O = S-adenosyl-L-methionine + phosphate + diphosphate. Its pathway is amino-acid biosynthesis; S-adenosyl-L-methionine biosynthesis; S-adenosyl-L-methionine from L-methionine: step 1/1. In terms of biological role, catalyzes the formation of S-adenosylmethionine from methionine and ATP. The reaction comprises two steps that are both catalyzed by the same enzyme: formation of S-adenosylmethionine (AdoMet) and triphosphate, and subsequent hydrolysis of the triphosphate. This Petunia hybrida (Petunia) protein is S-adenosylmethionine synthase 3 (SAM3).